A 376-amino-acid chain; its full sequence is Alanine racemase (376 aa).

The Proton acceptor; specific for D-alanine role is filled by Lys36. Lys36 bears the N6-(pyridoxal phosphate)lysine mark. Arg134 contributes to the substrate binding site. Catalysis depends on Tyr266, which acts as the Proton acceptor; specific for L-alanine. Met314 lines the substrate pocket.

Belongs to the alanine racemase family. It depends on pyridoxal 5'-phosphate as a cofactor.

It catalyses the reaction L-alanine = D-alanine. It functions in the pathway amino-acid biosynthesis; D-alanine biosynthesis; D-alanine from L-alanine: step 1/1. Catalyzes the interconversion of L-alanine and D-alanine. May also act on other amino acids. The polypeptide is Alanine racemase (alr) (Nitratidesulfovibrio vulgaris (strain DP4) (Desulfovibrio vulgaris)).